Consider the following 443-residue polypeptide: Ribulose bisphosphate carboxylase large chain (443 aa).

Residue lysine 3 is modified to N6,N6,N6-trimethyllysine. Positions 112 and 162 each coordinate substrate. The active-site Proton acceptor is lysine 164. Residue lysine 166 participates in substrate binding. Positions 190, 192, and 193 each coordinate Mg(2+). Lysine 190 is modified (N6-carboxylysine). Histidine 283 functions as the Proton acceptor in the catalytic mechanism. 3 residues coordinate substrate: arginine 284, histidine 316, and serine 368.

It belongs to the RuBisCO large chain family. Type I subfamily. As to quaternary structure, heterohexadecamer of 8 large chains and 8 small chains; disulfide-linked. The disulfide link is formed within the large subunit homodimers. Mg(2+) serves as cofactor. In terms of processing, the disulfide bond which can form in the large chain dimeric partners within the hexadecamer appears to be associated with oxidative stress and protein turnover.

The protein resides in the plastid. It localises to the chloroplast. The catalysed reaction is 2 (2R)-3-phosphoglycerate + 2 H(+) = D-ribulose 1,5-bisphosphate + CO2 + H2O. It catalyses the reaction D-ribulose 1,5-bisphosphate + O2 = 2-phosphoglycolate + (2R)-3-phosphoglycerate + 2 H(+). In terms of biological role, ruBisCO catalyzes two reactions: the carboxylation of D-ribulose 1,5-bisphosphate, the primary event in carbon dioxide fixation, as well as the oxidative fragmentation of the pentose substrate in the photorespiration process. Both reactions occur simultaneously and in competition at the same active site. This chain is Ribulose bisphosphate carboxylase large chain, found in Iris germanica (Bearded iris).